A 92-amino-acid polypeptide reads, in one-letter code: Mediator-associated protein 3 (92 aa).

Positions 13 to 70 (KDLRRKIKKTVKKILESSNLYKITEIKAREEASLKLDLDLSQDPYKVIVKEEVENFLE) constitute a DEK-C domain.

As to quaternary structure, associated with the Mediator complex.

Its subcellular location is the nucleus. The protein is Mediator-associated protein 3 of Arabidopsis thaliana (Mouse-ear cress).